A 371-amino-acid polypeptide reads, in one-letter code: Queuine tRNA-ribosyltransferase (371 aa).

The active-site Proton acceptor is the Asp-89. Residues 89–93, Asp-143, Gln-185, and Gly-212 each bind substrate; that span reads DSGGF. Residues 243 to 249 form an RNA binding region; that stretch reads GVGKPED. Asp-262 acts as the Nucleophile in catalysis. Residues 267 to 271 are RNA binding; important for wobble base 34 recognition; it reads TRNAR. Zn(2+) contacts are provided by Cys-300, Cys-302, Cys-305, and His-331.

Belongs to the queuine tRNA-ribosyltransferase family. Homodimer. Within each dimer, one monomer is responsible for RNA recognition and catalysis, while the other monomer binds to the replacement base PreQ1. The cofactor is Zn(2+).

It carries out the reaction 7-aminomethyl-7-carbaguanine + guanosine(34) in tRNA = 7-aminomethyl-7-carbaguanosine(34) in tRNA + guanine. It participates in tRNA modification; tRNA-queuosine biosynthesis. Functionally, catalyzes the base-exchange of a guanine (G) residue with the queuine precursor 7-aminomethyl-7-deazaguanine (PreQ1) at position 34 (anticodon wobble position) in tRNAs with GU(N) anticodons (tRNA-Asp, -Asn, -His and -Tyr). Catalysis occurs through a double-displacement mechanism. The nucleophile active site attacks the C1' of nucleotide 34 to detach the guanine base from the RNA, forming a covalent enzyme-RNA intermediate. The proton acceptor active site deprotonates the incoming PreQ1, allowing a nucleophilic attack on the C1' of the ribose to form the product. After dissociation, two additional enzymatic reactions on the tRNA convert PreQ1 to queuine (Q), resulting in the hypermodified nucleoside queuosine (7-(((4,5-cis-dihydroxy-2-cyclopenten-1-yl)amino)methyl)-7-deazaguanosine). The protein is Queuine tRNA-ribosyltransferase of Pseudomonas syringae pv. tomato (strain ATCC BAA-871 / DC3000).